Consider the following 500-residue polypeptide: Probable cytosol aminopeptidase (500 aa).

Lys-264 and Asp-269 together coordinate Mn(2+). Lys-276 is an active-site residue. 3 residues coordinate Mn(2+): Asp-287, Asp-346, and Glu-348. Arg-350 is an active-site residue.

It belongs to the peptidase M17 family. Mn(2+) serves as cofactor.

It is found in the cytoplasm. It carries out the reaction Release of an N-terminal amino acid, Xaa-|-Yaa-, in which Xaa is preferably Leu, but may be other amino acids including Pro although not Arg or Lys, and Yaa may be Pro. Amino acid amides and methyl esters are also readily hydrolyzed, but rates on arylamides are exceedingly low.. The enzyme catalyses Release of an N-terminal amino acid, preferentially leucine, but not glutamic or aspartic acids.. Its function is as follows. Presumably involved in the processing and regular turnover of intracellular proteins. Catalyzes the removal of unsubstituted N-terminal amino acids from various peptides. The sequence is that of Probable cytosol aminopeptidase from Rhodopseudomonas palustris (strain BisB5).